Here is a 147-residue protein sequence, read N- to C-terminus: Hemoglobin subunit delta (147 aa).

V2 carries the post-translational modification N-acetylalanine; in variant Niigata. The Globin domain occupies 3–147 (HLTPEEKTAV…VANALAHKYH (145 aa)). Phosphoserine is present on S51. Positions 64 and 93 each coordinate heme b.

The protein belongs to the globin family. As to quaternary structure, heterotetramer of two alpha chains and two delta chains in adult hemoglobin A2 (HbA2). HbA2 represents less than 3.5% of adult hemoglobin. In terms of tissue distribution, red blood cells.

Involved in oxygen transport from the lung to the various peripheral tissues. This chain is Hemoglobin subunit delta (HBD), found in Homo sapiens (Human).